Here is a 342-residue protein sequence, read N- to C-terminus: Peptide chain release factor 1 (342 aa).

An N5-methylglutamine modification is found at Gln-211. Residues Lys-262–Lys-282 are disordered.

Belongs to the prokaryotic/mitochondrial release factor family. Post-translationally, methylated by PrmC. Methylation increases the termination efficiency of RF1.

It is found in the cytoplasm. Its function is as follows. Peptide chain release factor 1 directs the termination of translation in response to the peptide chain termination codons UAG and UAA. In Thermotoga maritima (strain ATCC 43589 / DSM 3109 / JCM 10099 / NBRC 100826 / MSB8), this protein is Peptide chain release factor 1 (prfA).